The sequence spans 829 residues: Exocyst complex component SEC10b (829 aa).

The stretch at 244–266 forms a coiled coil; the sequence is RGLEVAVANLQDYCNELENRLLS.

Belongs to the SEC10 family. As to quaternary structure, the exocyst complex is composed of SEC3, SEC5, SEC6, SEC8, SEC10, EXO70A1 and EXO84B. Interacts with EXO84B. Binds to EXO70E2. As to expression, expressed in seedlings, roots, leaves and flowers.

The protein localises to the cytoplasm. Its subcellular location is the cytosol. The protein resides in the secreted. It is found in the extracellular exosome. Its function is as follows. Component of the exocyst complex involved in the docking of exocytic vesicles with fusion sites on the plasma membrane during regulated or polarized secretion. Involved in polarized cell growth and organ morphogenesis. During cytokinesis, involved in cell plate initiation, cell plate maturation and formation of new primary cell wall. The protein is Exocyst complex component SEC10b of Arabidopsis thaliana (Mouse-ear cress).